We begin with the raw amino-acid sequence, 408 residues long: MSLSVTRENFDEWMVPVYVPAPFIPVRGEGSRLWDQQGKEYIDFAGGIAVNALGHAHPALREALNEQANRFWHTGNGYTNEPALRLAKKLIDATFAERVFFCNSGAEANEAALKLARKYAHDRVGNHKSGIVAFKNAFHGRTLFTVSAGGQPTYSQDFAPLPPDIRHAAYNDLNSASALIDDNTCAVIVEPVQGEGGVIPATNAFLQGLRELCDRHQALLIFDEVQTGVGRTGELYAYMHYGVTPDILTTAKALGGGFPIGAMLTTQDYASVMTPGTHGTTYGGNPLATAVAGKVLDIINTPEMQNGVRQRHDAFIERLNTINVRFGMFSEIRGLGLLLGCVLQTEFAGKAKLIAQEAAKAGVMVLIAGGDVVRFAPALNVSDEEIATGLDRFALACERLQAGGASCG.

Position 252 is an N6-(pyridoxal phosphate)lysine (K252).

Belongs to the class-III pyridoxal-phosphate-dependent aminotransferase family. AstC subfamily. The cofactor is pyridoxal 5'-phosphate.

It carries out the reaction N(2)-succinyl-L-ornithine + 2-oxoglutarate = N-succinyl-L-glutamate 5-semialdehyde + L-glutamate. It functions in the pathway amino-acid degradation; L-arginine degradation via AST pathway; L-glutamate and succinate from L-arginine: step 3/5. Functionally, catalyzes the transamination of N(2)-succinylornithine and alpha-ketoglutarate into N(2)-succinylglutamate semialdehyde and glutamate. Can also act as an acetylornithine aminotransferase. In Salmonella typhi, this protein is Succinylornithine transaminase.